The primary structure comprises 34 residues: Photosystem II reaction center protein Psb30 (34 aa).

Residues 6–26 form a helical membrane-spanning segment; it reads VIGQLTSLAMIVLVGPAVIVV.

Belongs to the Psb30/Ycf12 family. PSII is composed of 1 copy each of membrane proteins PsbA, PsbB, PsbC, PsbD, PsbE, PsbF, PsbH, PsbI, PsbJ, PsbK, PsbL, PsbM, PsbT, PsbX, PsbY, PsbZ, Psb30/Ycf12, peripheral proteins of the oxygen-evolving complex and a large number of cofactors. It forms dimeric complexes.

Its subcellular location is the plastid. The protein localises to the chloroplast thylakoid membrane. Its function is as follows. A core subunit of photosystem II (PSII), probably helps stabilize the reaction center. The protein is Photosystem II reaction center protein Psb30 of Gracilaria tenuistipitata var. liui (Red alga).